A 576-amino-acid chain; its full sequence is Putative export ATP-binding/permease protein RP696 (576 aa).

The 284-residue stretch at 20-303 (LIIVMISLLS…IFELLSEMHL (284 aa)) folds into the ABC transmembrane type-1 domain. 6 consecutive transmembrane segments (helical) span residues 21–41 (IIVM…GSIF), 61–81 (ILYI…RSYF), 135–155 (FLSF…LMFF), 158–178 (FKLA…LIKF), 242–262 (ALFF…IVWI), and 277–297 (IISF…IFEL). The region spanning 336–572 (IEFKNVDFTY…SEIYRNICRE (237 aa)) is the ABC transporter domain. 371–378 (GRSGAGKS) is a binding site for ATP.

It belongs to the ABC transporter superfamily. Homodimer.

The protein localises to the cell inner membrane. Part of an ABC transporter complex. Transmembrane domains (TMD) form a pore in the inner membrane and the ATP-binding domain (NBD) is responsible for energy generation. This Rickettsia prowazekii (strain Madrid E) protein is Putative export ATP-binding/permease protein RP696.